A 329-amino-acid chain; its full sequence is Beta-ketoacyl-[acyl-carrier-protein] synthase III (329 aa).

Active-site residues include cysteine 123 and histidine 256. The ACP-binding stretch occupies residues 257-261 (QANIR). Asparagine 286 is a catalytic residue.

The protein belongs to the thiolase-like superfamily. FabH family. Homodimer.

The protein resides in the cytoplasm. The enzyme catalyses malonyl-[ACP] + acetyl-CoA + H(+) = 3-oxobutanoyl-[ACP] + CO2 + CoA. The protein operates within lipid metabolism; fatty acid biosynthesis. Catalyzes the condensation reaction of fatty acid synthesis by the addition to an acyl acceptor of two carbons from malonyl-ACP. Catalyzes the first condensation reaction which initiates fatty acid synthesis and may therefore play a role in governing the total rate of fatty acid production. Possesses both acetoacetyl-ACP synthase and acetyl transacylase activities. Its substrate specificity determines the biosynthesis of branched-chain and/or straight-chain of fatty acids. This Paraburkholderia phymatum (strain DSM 17167 / CIP 108236 / LMG 21445 / STM815) (Burkholderia phymatum) protein is Beta-ketoacyl-[acyl-carrier-protein] synthase III.